We begin with the raw amino-acid sequence, 853 residues long: MSRFFAASDSSSEESSEEELYSDNEASAQEDSDKDSDDDDSDDDDSSSGSEAGGANRFLKDADSDSESEDEDQNKVLKSAKDKRFDELEATIRLIENAQRINDWAVISDQFDKLNRQAPTLMKQNDGKVPKLYIQAIADLETVVLETHEKQKVTPKKMNAVNTRGFNAVRQKVKKHNREFQKDIDLYRENKDEFMRETEEVEAAPKEKKKKSKIPQLGTEIVDEATDDGFITVGAGGKAVQYTPEGILKHLRAIVEQRGRKNSDKLEHIRTLEKLFDVSVNDYQRIRVLLTLISTRFDLTSGTASHMHQDQWKLADQEFGKLLEILENTKEIVVIENAEEWEDDDKLPPIEEGQIFRIPGSVVSFVERLDDELTRSLQHIDPHTAEYVERLTDEALLYAQLVRALIYVESLKKNASLELPQESLNRVVMRRLEHVYFKPSQVVTIMEANSWKAVPETLDSEVTPRAISNDTTSLVQTLSTYLFQNSEGIIRARAMLCQIYFLALHDQYYKARDMMLMSHLQETISNFDVNTQILFNRALVQVGLCAFRAGLVYESQNSLQEICGSNRQKELLAQGLQMQRYSQISPEQERLERQRQLPFHMHINLELLECVYLTCSMLLEIPLLAQLGSSPDLRKRVISKTYRRLLEYHERQIFTGPPENTRDHVMQASKALSAGEWKKAAEFINSIKIWELVADSEKIKEMLSAQIQEEGLRTYLFTYAPYYDTLAVSTLASMFELSERKVSAVVSKMISHEELAAALDQVNSAIIFRKGVELSRLQTLALSLSDKASGLIESNEKTLEQRTQGTANAFERQGGRGGRGGGRGRGGGRGGGVPRGGRNQQFTGGALGRAIQA.

Residues 1-78 (MSRFFAASDS…EDEDQNKVLK (78 aa)) are disordered. Residues 11 to 46 (SSEESSEEELYSDNEASAQEDSDKDSDDDDSDDDDS) show a composition bias toward acidic residues. One can recognise a PCI domain in the interval 599–773 (FHMHINLELL…SAIIFRKGVE (175 aa)). The tract at residues 798 to 853 (TLEQRTQGTANAFERQGGRGGRGGGRGRGGGRGGGVPRGGRNQQFTGGALGRAIQA) is disordered. Positions 815-835 (GRGGRGGGRGRGGGRGGGVPR) are enriched in gly residues.

This sequence belongs to the eIF-3 subunit C family. Component of the eukaryotic translation initiation factor 3 (eIF-3) complex.

The protein localises to the cytoplasm. Component of the eukaryotic translation initiation factor 3 (eIF-3) complex, which is involved in protein synthesis of a specialized repertoire of mRNAs and, together with other initiation factors, stimulates binding of mRNA and methionyl-tRNAi to the 40S ribosome. The eIF-3 complex specifically targets and initiates translation of a subset of mRNAs involved in cell proliferation. In Phaeosphaeria nodorum (strain SN15 / ATCC MYA-4574 / FGSC 10173) (Glume blotch fungus), this protein is Eukaryotic translation initiation factor 3 subunit C.